Reading from the N-terminus, the 270-residue chain is MYFLLSPAKSLNETDAVPVHISNYYSQPELIEHSQALMKILKSKEPIDLQELMSISDDLSQLNAKRNQEWNWSVEQPFTDSASGNLAKPAGYLFDGDVYTGLDMYAMDKESAIYVNEHLGILSGLYGVLKPLDLIQPYRLEMGTKLKNECGDNLYEFWGEEVTNTINARMVDSDDTVLINLASNEYFKSVKKKALAAEIVTPRFEDEKNGQYKVISFYAKKARGLMVKYAADNKLTNAEQLKQFNLAGYYYVDELSDDKTWVFRRDAADQ.

This sequence belongs to the UPF0246 family.

The protein is UPF0246 protein Psyc_0554 of Psychrobacter arcticus (strain DSM 17307 / VKM B-2377 / 273-4).